Reading from the N-terminus, the 157-residue chain is Small ribosomal subunit protein uS7 (157 aa).

It belongs to the universal ribosomal protein uS7 family. As to quaternary structure, part of the 30S ribosomal subunit. Contacts proteins S9 and S11.

Its function is as follows. One of the primary rRNA binding proteins, it binds directly to 16S rRNA where it nucleates assembly of the head domain of the 30S subunit. Is located at the subunit interface close to the decoding center, probably blocks exit of the E-site tRNA. In Koribacter versatilis (strain Ellin345), this protein is Small ribosomal subunit protein uS7.